Reading from the N-terminus, the 272-residue chain is Large ribosomal subunit protein uL29m (272 aa).

Disordered regions lie at residues 1–29 (MAAAAMRPSMGALGRISSSTPSPLRPLTQ), 56–87 (KHRGESAIHRSGTRWRLSMSDEPLPRPVPRNK), and 227–272 (AAAT…TPRL). A compositionally biased stretch (low complexity) spans 17-29 (SSSTPSPLRPLTQ). Composition is skewed to low complexity over residues 227 to 238 (AAATEGEQQAAE) and 249 to 259 (PATAATPESAT). The segment covering 260–272 (IPSSQQQTDTPRL) has biased composition (polar residues).

Belongs to the universal ribosomal protein uL29 family. As to quaternary structure, component of the mitochondrial large ribosomal subunit. Mature mitochondrial ribosomes consist of a small (37S) and a large (54S) subunit. The 37S subunit contains at least 33 different proteins and 1 molecule of RNA (15S). The 54S subunit contains at least 45 different proteins and 1 molecule of RNA (21S).

The protein resides in the mitochondrion. The sequence is that of Large ribosomal subunit protein uL29m (MRPL4) from Chaetomium globosum (strain ATCC 6205 / CBS 148.51 / DSM 1962 / NBRC 6347 / NRRL 1970) (Soil fungus).